We begin with the raw amino-acid sequence, 403 residues long: Ribosomal RNA large subunit methyltransferase I (403 aa).

Positions Y9 to R88 constitute a PUA domain.

This sequence belongs to the methyltransferase superfamily. RlmI family.

It localises to the cytoplasm. The enzyme catalyses cytidine(1962) in 23S rRNA + S-adenosyl-L-methionine = 5-methylcytidine(1962) in 23S rRNA + S-adenosyl-L-homocysteine + H(+). Its function is as follows. Specifically methylates the cytosine at position 1962 (m5C1962) of 23S rRNA. This chain is Ribosomal RNA large subunit methyltransferase I, found in Salmonella choleraesuis (strain SC-B67).